The sequence spans 198 residues: Probable GTP-binding protein EngB (198 aa).

The EngB-type G domain maps to 22–195 (HRNEVAFVGR…IDKLFLEFAT (174 aa)). Residues 30-37 (GRSNVGKS), 57-61 (GKTRL), 75-78 (DLPG), 142-145 (TKSD), and 174-176 (YSS) contribute to the GTP site. Positions 37 and 59 each coordinate Mg(2+).

The protein belongs to the TRAFAC class TrmE-Era-EngA-EngB-Septin-like GTPase superfamily. EngB GTPase family. Requires Mg(2+) as cofactor.

Functionally, necessary for normal cell division and for the maintenance of normal septation. This chain is Probable GTP-binding protein EngB, found in Clostridium botulinum (strain Eklund 17B / Type B).